A 524-amino-acid polypeptide reads, in one-letter code: MRRWLVASMAPQLHQLLQPVRRCHHPLRIPSVQLAAPRSHTHEDIAYASCPACSRVVHMCDMLTHLITAHRELDQTHCRKMCTERLALYERVIGVPLKKSELTSSGRRVLDFLPTVLPTGYMCNWCDRRSDVYATRDKFLKHVADVHTDIDLEEVEPHVPLPPRGVVVEKSNGDGGPQPTRRLNGVVAVAEKSEPINAVPRILGISLPRGVDRPLKATAQFSDTEFPCELCNRTFNSEIDLLQHLETRHPDGTAEGPAGVDSAAIADVAQFSAKEATTGGDQRVHVICDLCVSSSKVYKMPSALFSHIRFKHPNEDAAFHVERLIREQKTVSSFVCTVCQKAFASAAALDGHFNSKHAEQGEAQNVVGRVTANNCWWCHDCEKGFSSAKGLHGHMQNKHGLSSQTHPCPACKRVFADIYSLEEHLSLQHKTIRLSDIGLLTHVKCSTCERFFLSHEDLHRHAVKHHKKDPRAPAQPFEAPTSASHVAASTSAAVPSEVEATASPQGPRKVKKRKKTTEVSEVTS.

The transit peptide at 1–22 (MRRWLVASMAPQLHQLLQPVRR) directs the protein to the mitochondrion. Residues 48 to 70 (ASCPACSRVVHMCDMLTHLITAH) form a C2H2-type 1; atypical zinc finger. The C2H2-type 2; atypical zinc finger occupies 121–147 (YMCNWCDRRSDVYATRDKFLKHVADVH). The segment at 226 to 249 (FPCELCNRTFNSEIDLLQHLETRH) adopts a C2H2-type 4 zinc-finger fold. A C2H2-type 3; atypical zinc finger spans residues 286–312 (VICDLCVSSSKVYKMPSALFSHIRFKH). C2H2-type zinc fingers lie at residues 334 to 357 (FVCTVCQKAFASAAALDGHFNSKH), 376 to 399 (WWCHDCEKGFSSAKGLHGHMQNKH), 406 to 429 (HPCPACKRVFADIYSLEEHLSLQH), and 443 to 465 (VKCSTCERFFLSHEDLHRHAVKH). Residues 463 to 524 (VKHHKKDPRA…KTTEVSEVTS (62 aa)) form a disordered region. The span at 479 to 500 (APTSASHVAASTSAAVPSEVEA) shows a compositional bias: low complexity.

As to quaternary structure, component of the REH2-associated complex (REH2C) composed of helicase REH2, associated factors H2F1 and H2F2, and mRNAs at various editing stages; the formation of the complex is RNA-independent. Within the complex, interacts with REH2; the interaction is direct. Interacts with various editing complexes including the RNA editing core (RECC) complex, the gRNA-binding (GRBC) complex (also known as the MRB1 complex) and the RNA editing mediator (REMC) complex.

Its subcellular location is the mitochondrion. In terms of biological role, plays an important role in mitochondrial mRNA editing by promoting the assembly of the mRNA editosome. Facilitates the recruitment of mRNA to the REH2C complex and promotes the interaction between various editing complexes including REH2C, GRBC, REMC and RECC complexes. This Trypanosoma brucei brucei (strain 927/4 GUTat10.1) protein is REH2-associated factor 1.